A 140-amino-acid polypeptide reads, in one-letter code: Cytochrome c-type biogenesis protein CcmE (140 aa).

At 1–7 the chain is on the cytoplasmic side; that stretch reads MKRKHKR. A helical; Signal-anchor for type II membrane protein transmembrane segment spans residues 8-28; sequence LLFVLASFCAAGCALLFILSE. Topologically, residues 29–140 are periplasmic; that stretch reads LRESVSFFYT…TAPKSSPEPK (112 aa). Positions 121 and 125 each coordinate heme.

This sequence belongs to the CcmE/CycJ family.

The protein resides in the cell inner membrane. Heme chaperone required for the biogenesis of c-type cytochromes. Transiently binds heme delivered by CcmC and transfers the heme to apo-cytochromes in a process facilitated by CcmF and CcmH. The sequence is that of Cytochrome c-type biogenesis protein CcmE from Anaplasma marginale (strain St. Maries).